The chain runs to 169 residues: Benzoate 1,2-dioxygenase subunit beta (169 aa).

The protein belongs to the bacterial ring-hydroxylating dioxygenase beta subunit family. This dioxygenase system consists of three proteins: the two subunits of the hydroxylase (BenA and BenB), and an electron transfer component (BenC).

It catalyses the reaction benzoate + NADH + O2 + H(+) = (1R,6S)-1,6-dihydroxycyclohexa-2,4-diene-1-carboxylate + NAD(+). The protein operates within aromatic compound metabolism; benzoate degradation via hydroxylation; catechol from benzoate: step 1/2. Degradation of benzoate to 2-hydro-1,2-dihydroxybenzoate (DHB). The beta subunit may be responsible for the substrate specificity of the enzyme. The chain is Benzoate 1,2-dioxygenase subunit beta (benB) from Acinetobacter baylyi (strain ATCC 33305 / BD413 / ADP1).